The following is a 180-amino-acid chain: MRILGIDPGLRVTGFGVIDVSGHRLAYVTSGVIRTPTADLATRLGTIFQGVSTIVREHAPDQAAIEKVFVNVNPQSTLLLGQARGAAICGLVAGGLPVAEYTALQLKQAVVGYGRATKTQMQEMVTRLLNLSGQPGSDAADALGMAICHAHGGNTLSTLGGLAPALAQKGLRVRRGRLVG.

Residues aspartate 7, glutamate 66, and aspartate 138 contribute to the active site. The Mg(2+) site is built by aspartate 7, glutamate 66, and aspartate 138.

This sequence belongs to the RuvC family. In terms of assembly, homodimer which binds Holliday junction (HJ) DNA. The HJ becomes 2-fold symmetrical on binding to RuvC with unstacked arms; it has a different conformation from HJ DNA in complex with RuvA. In the full resolvosome a probable DNA-RuvA(4)-RuvB(12)-RuvC(2) complex forms which resolves the HJ. Mg(2+) serves as cofactor.

The protein resides in the cytoplasm. The enzyme catalyses Endonucleolytic cleavage at a junction such as a reciprocal single-stranded crossover between two homologous DNA duplexes (Holliday junction).. The RuvA-RuvB-RuvC complex processes Holliday junction (HJ) DNA during genetic recombination and DNA repair. Endonuclease that resolves HJ intermediates. Cleaves cruciform DNA by making single-stranded nicks across the HJ at symmetrical positions within the homologous arms, yielding a 5'-phosphate and a 3'-hydroxyl group; requires a central core of homology in the junction. The consensus cleavage sequence is 5'-(A/T)TT(C/G)-3'. Cleavage occurs on the 3'-side of the TT dinucleotide at the point of strand exchange. HJ branch migration catalyzed by RuvA-RuvB allows RuvC to scan DNA until it finds its consensus sequence, where it cleaves and resolves the cruciform DNA. This is Crossover junction endodeoxyribonuclease RuvC from Burkholderia orbicola (strain AU 1054).